Here is a 136-residue protein sequence, read N- to C-terminus: UPF0225 protein Pnap_0466 (136 aa).

This sequence belongs to the UPF0225 family.

This chain is UPF0225 protein Pnap_0466, found in Polaromonas naphthalenivorans (strain CJ2).